The primary structure comprises 101 residues: NADH-quinone oxidoreductase subunit K (101 aa).

A run of 3 helical transmembrane segments spans residues 4-24 (LSHY…GIFL), 30-50 (IILL…FVAF), and 61-81 (IFVF…LAIL).

Belongs to the complex I subunit 4L family. NDH-1 is composed of 14 different subunits. Subunits NuoA, H, J, K, L, M, N constitute the membrane sector of the complex.

The protein localises to the cell inner membrane. The catalysed reaction is a quinone + NADH + 5 H(+)(in) = a quinol + NAD(+) + 4 H(+)(out). NDH-1 shuttles electrons from NADH, via FMN and iron-sulfur (Fe-S) centers, to quinones in the respiratory chain. The immediate electron acceptor for the enzyme in this species is believed to be ubiquinone. Couples the redox reaction to proton translocation (for every two electrons transferred, four hydrogen ions are translocated across the cytoplasmic membrane), and thus conserves the redox energy in a proton gradient. This Nitrosomonas eutropha (strain DSM 101675 / C91 / Nm57) protein is NADH-quinone oxidoreductase subunit K.